A 2664-amino-acid chain; its full sequence is MSEMSSFLHIGDIVSLYAEGSVNGFISTLGLVDDRCVVEPAAGDLDNPPKKFRDCLFKVCPMNRYSAQKQYWKAKQTKQDKEKIADVVLLQKLQHAAQMEQKQNDTENKKVHGDVVKYGSVIQLLHMKSNKYLTVNKRLPALLEKNAMRVTLDATGNEGSWLFIQPFWKLRSNGDNVVVGDKVILNPVNAGQPLHASNYELSDNAGCKEVNSVNCNTSWKINLFMQFRDHLEEVLKGGDVVRLFHAEQEKFLTCDEYRGKLQVFLRTTLRQSATSATSSNALWEVEVVHHDPCRGGAGHWNGLYRFKHLATGNYLAAEENPSYKGDASDPKAAGTGAQGRTGRRNAGEKIKYRLVAVPHGNDIASLFELDPTTLQKTDSFVPRNSYVRLRHLCTNTWIQSTNVPIDVEEERPIRLMLGTCPTKEDKEAFAIVSVPVSEIRDLDFANDASSMLASAVEKLHEGFISQNDRRFVIQLLEDLVFFVSDVPNNGQNVLDIMVTKPNRERQKLMREQNILKQIFGILKAPFRDKGGEGPLVRLEELSDQKNAPYQHMFRLCYRVLRHSQEDYRKNQEHIAKQFGMMQSQIGYDILAEDTITALLHNNRKLLEKHITKTEVETFVSLVRKNREPRFLDYLSDLCVSNHIAIPVTQELICKCVLDPKNSDILIQTELRPVKEMAQSHEYLSIEYSEEEVWLTWTDKNNEHHEKSVRQLAQEARAGNAHDENVLSYYRYQLKLFARMCLDRQYLAIDEISQQLGVDLIFLCMADEMLPFDLRASFCHLMLHVHVDRDPQELVTPVKFARLWTEIPTAITIKDYDSNLNASRDDKKNKFASTMEFVEDYLNNVVSEAVPFANEEKNKLTFEVVSLAHNLIYFGFYSFSELLRLTRTLLGIIDCVQAYEDPGGKNVRRSTQGVGHMMSTMVLNRKQSVFGGPSLPAGAGAPEPLDGSKFEENEDIVVMETKLKILEILQFILNVRLDYRISYLLSVFKKEFVEVFPMQDSGADGTAPAFDSTTANMNLDRIGEQAEAMFGVGKTSSMLEVDDEGGRMLLRVLIHLTMHDYAPLVSGALQLLFKHFSQRQEVMHTFKQVQLLISAQDVENYKVIKSELDRLRTMVEKSELWVDKKGASKGEEGEAGPAKDKKERPTDEEGFLHPPGEKSSENYQIVKGILERLNKMCGVGEQMRKKQQRLLKNMDAHKVMLDLLQIPYDKGDAKMMEILRYTHQFLQKFCAGNPGNQALLHKHLHLFLTPGLLEAETMQHIFLNNYQLCSEIGEPVLQHFVHLLATHGHHVQYLDFLHTVIKAEGKYVKKCQDMIMTEPANAGDDVVVFYNDKASLAHLLDMMKAARDGVEDHSPLMYHISLVDLLAACAEGKNVYTEIKCTSLLPLEDVVSVVTHEDCITEVKMAYVNFVNHCYVDTEVEMKEIYTSNHIWTLFENFTLDMARVCSKREKRLADPALEKYVLTVVLDTISAFFSSPFSENSTSLQTHQTIVVQLLQSTMRLLECPWLQQQHKGSVEACIRTLAMVAKGRAISLPMDLDAHISSLLSSGASCVAAAQRNASNYKTATRAFPRVMPTANQWDYKNIIEKLQDIITALEERLRPLVQAELSVLVDVLHWPELLFLEGSDAYQRCESGGFLSKLIQHTKDLMESEEKLCVKVLRTLQQMLLKKTKYGDRGNQLRKMLLQNYLQNRKSSSRGDLPDPMGTGLDQDWSAIAATQCRLDKEGATKLVCDLITSTKNEKIFQESIGLAIRLLDGGNTEIQKSFYNLMTSDKKSERFFKVLHDRMKRAQQETKSTVAVNMSDLGSQPREDREQADPTSKGRVASFSMPSSSSRYALGPSLRRGHEVGERVQSNEMGTSVLIMQPILRFLQLLCENHNRDLQNFLRCQNNKTNYNLVCETLQFLDIMCGSTTGGLGLLGLYINEDNVGLVIQTLETLTEYCQGPCHENQTCIVTHESNGIDIITALILNDISPLCKYRMDLVLQLKDNASKLLLALMESRHDSENAERILISLRPQELVDVIKKAYLQEEERENSDVSPREVGHNIYILALQLSRHNKQLQHLLKPVKRIQEEEAEGISSMLSLNNKQLTQMLKSSAPVQEQEEDPLAYYENHTSQIEIVRQDRSMEQIVFPVPGICQFLTEETKHRLFTTTEQDEQGSKVSDLFDQPSFLHNEMEWQRKLRSMPLIYWFSRRMTLWGSISFNLAVFINIIIAFFYPYVEGASTGVLGSPLISLLFWILICFSIAALFTKRYSVRPLIVALILRSIYYLGIGPTLNILGALNLTNKIVFVVSFVGNRGTFIRGYKAMVMDMEFLYHVGYILTSVLGLFAHELFYSILLFDLIYREETLFNVIKSVTRNGRSILLTALLALILVYLFSIVGFLFLKDDFILEVDRLPGNHSRANPLGMPHGAATFVNTCSGDNVDCVSGVSVPEVLAEDEEPDSTERACDTLLMCIVTVMNHGLRNGGGVGDILRKPSKDESLFPARVVYDLLFFFIVIIIVLNLIFGVIIDTFADLRSEKQKKEEILKTTCFICGLERDKFDNKTVSFEEHIKFEHNMWNYLYFIVLVRVKNKTDYTGPESYVAQMIKNKNLDWFPRMRAMSLVSSEGEGEQNEIRILQDKLSATMKLVSHLTAQLSELKEQMTEQRKRRQRLGFVDVQNCMSR.

Residues 1–2227 (MSEMSSFLHI…YVEGASTGVL (2227 aa)) lie on the Cytoplasmic side of the membrane. 5 MIR domains span residues 113-173 (GDVV…LRSN), 174-224 (GDNV…INLF), 232-288 (EEVL…VEVV), 295-372 (GGAG…LDPT), and 378-434 (DSFV…IVSV). 1D-myo-inositol 1,4,5-trisphosphate is bound by residues Arg266, Thr268, Leu269, and Arg270. The segment at 320–344 (NPSYKGDASDPKAAGTGAQGRTGRR) is disordered. The 1D-myo-inositol 1,4,5-trisphosphate site is built by Arg503, Lys507, Arg510, Tyr567, Arg568, and Lys569. Position 743 (Arg743) interacts with Ca(2+). Phosphoserine is present on residues Ser909 and Ser927. Positions 1115 and 1118 each coordinate Ca(2+). Disordered stretches follow at residues 1124-1158 (KGASKGEEGEAGPAKDKKERPTDEEGFLHPPGEKS) and 1790-1850 (QQET…VGER). Residues 1792–1805 (ETKSTVAVNMSDLG) are compositionally biased toward polar residues. Ser1806, Ser1825, and Ser1827 each carry phosphoserine. Ca(2+)-binding residues include Glu1875 and Glu1939. The ATP site is built by Ala1989, Glu2142, and Lys2145. Residues 2228–2248 (GSPLISLLFWILICFSIAALF) form a helical membrane-spanning segment. The Extracellular segment spans residues 2249 to 2256 (TKRYSVRP). The chain crosses the membrane as a helical span at residues 2257-2277 (LIVALILRSIYYLGIGPTLNI). Topologically, residues 2278-2286 (LGALNLTNK) are cytoplasmic. The helical transmembrane segment at 2287–2304 (IVFVVSFVGNRGTFIRGY) threads the bilayer. Residues 2305–2318 (KAMVMDMEFLYHVG) are Extracellular-facing. A helical membrane pass occupies residues 2319–2339 (YILTSVLGLFAHELFYSILLF). At 2340-2361 (DLIYREETLFNVIKSVTRNGRS) the chain is on the cytoplasmic side. The chain crosses the membrane as a helical span at residues 2362–2382 (ILLTALLALILVYLFSIVGFL). The Extracellular segment spans residues 2383-2489 (FLKDDFILEV…ESLFPARVVY (107 aa)). Cys2448 and Cys2454 form a disulfide bridge. A helical transmembrane segment spans residues 2490–2510 (DLLFFFIVIIIVLNLIFGVII). At 2511–2664 (DTFADLRSEK…FVDVQNCMSR (154 aa)) the chain is on the cytoplasmic side. The ATP site is built by Cys2531 and Phe2532. Cys2531 provides a ligand contact to Zn(2+). The Zn(2+) site is built by Cys2534 and His2551. Residues Lys2553, His2556, Asn2557, and Met2558 each coordinate ATP. Zn(2+) is bound at residue His2556. Thr2574 contributes to the Ca(2+) binding site. A phosphoserine mark is found at Ser2602 and Ser2663.

It belongs to the InsP3 receptor family. Homotetramer. Homodimer. Interacts with TRPC1, TRPC3 and TRPC4. Interacts with TRPV4. Interacts with SIGMAR1. Interacts with PML and AKT1. Interacts with IRAG2 (via coiled-coil domain). Interacts with CABP1. Interacts with TMBIM4/LFG4. Interacts with CEMIP. Interacts with TESPA1. Interacts with TMEM203. Interacts with BOK; regulates ITPR3 expression. Interacts with BCL2L10. Interacts with CHGA and CHGB. Post-translationally, phosphorylated by AKT1 on serine and/or threonine residues.

It is found in the endoplasmic reticulum membrane. Its subcellular location is the cytoplasmic vesicle. The protein resides in the secretory vesicle membrane. It carries out the reaction Ca(2+)(in) = Ca(2+)(out). Its activity is regulated as follows. Inositol 1,4,5-trisphosphate-gated calcium channel is regulated by cytosolic calcium in a biphasic manner. At low concentrations, cytosolic calcium binds at a high-affinity juxtamembrane domain (JD) calcium binding site, allowing ITPR3 to activate by escaping a low-energy resting state through an ensemble of preactivated states. At high cytosolic calcium concentrations, ITPR3 preferentially enters an inhibited state stabilized by calcium binding at a second, low-affinity cytoplasmic domain (CD) calcium binding site. Functionally, inositol 1,4,5-trisphosphate-gated calcium channel that, upon 1D-myo-inositol 1,4,5-trisphosphate binding, transports calcium from the endoplasmic reticulum lumen to cytoplasm, thus releasing the intracellular calcium and therefore participates in cellular calcium ion homeostasis. 1D-myo-inositol 1,4,5-trisphosphate binds to the ligand-free channel without altering its global conformation, yielding the low-energy resting state, then progresses through resting-to preactivated transitions to the higher energy preactivated state, which increases affinity for calcium, promoting binding of the low basal cytosolic calcium at the juxtamembrane domain (JD) site, favoring the transition through the ensemble of high-energy intermediate states along the trajectory to the fully-open activated state. Upon opening, releases calcium in the cytosol where it can bind to the low-affinity cytoplasmic domain (CD) site and stabilizes the inhibited state to terminate calcium release. The polypeptide is Inositol 1,4,5-trisphosphate-gated calcium channel ITPR3 (Bos taurus (Bovine)).